The chain runs to 350 residues: RING finger protein 44 (350 aa).

The RING-type; atypical zinc-finger motif lies at 298–339; sequence CVVCFSDFEVRQLLRVLPCNHEFHAKCVDKWLKANRTCPICR.

This is RING finger protein 44 (Rnf44) from Rattus norvegicus (Rat).